The primary structure comprises 313 residues: Porphobilinogen deaminase (313 aa).

The residue at position 242 (C242) is an S-(dipyrrolylmethanemethyl)cysteine.

This sequence belongs to the HMBS family. Monomer. Dipyrromethane is required as a cofactor.

The catalysed reaction is 4 porphobilinogen + H2O = hydroxymethylbilane + 4 NH4(+). It functions in the pathway porphyrin-containing compound metabolism; protoporphyrin-IX biosynthesis; coproporphyrinogen-III from 5-aminolevulinate: step 2/4. Its function is as follows. Tetrapolymerization of the monopyrrole PBG into the hydroxymethylbilane pre-uroporphyrinogen in several discrete steps. This Yersinia pseudotuberculosis serotype O:3 (strain YPIII) protein is Porphobilinogen deaminase.